An 828-amino-acid polypeptide reads, in one-letter code: MKLSRRGFMKANAVAAAAAAAGLSVPGVARAVVGQQEAIKWDKAPCRFCGTGCGVLVGTQQGRVVACQGDPDAPVNRGLNCIKGYFLPKIMYGEDRLTQPLLRMKNGKYDKEGEFTPITWDQAFDVMEEKFKTALKEKGPESIGMFGSGQWTIWEGYAASKLFKAGFRSNNIDPNARHCMASAVVGFMRTFGMDEPMGCYDDIEQADAFVLWGANMAEMHPILWSRITNRRLSNQNVTVAVLSTYQHRSFELADNGIIFTPQSDLVILNYIANYIIQNNAINQDFFSKHVNLRKGATDIGYGLRPTHPLEKAAKNPGSDASEPMSFEDYKAFVAEYTLEKTAEMTGVPKDQLEQLAQLYADPNKKVISYWTMGFNQHTRGVWANNLVYNLHLLTGKISQPGCGPFSLTGQPSACGTAREVGTFAHRLPADMVVTNEKHRDICEKKWNIPSGTIPAKIGLHAVAQDRALKDGKLNVYWTMCTNNMQAGPNINEERMPGWRDPRNFIIVSDPYPTVSALAADLILPTAMWVEKEGAYGNAERRTQFWRQQVQAPGEAKSDLWQLVQFSRRFKTEEVWPEELLAKKPELRGKTLYEVLYATPEVSKFPVSELAEDQLNDESRELGFYLQKGLFEEYAWFGRGHGHDLAPFDDYHKARGLRWPVVNGKETQWRYSEGNDPYVKAGEGYKFYGKPDGKAVIFALPFEPAAEAPDEEYDLWLSTGRVLEHWHTGSMTRRVPELHRAFPEAVLFIHPLDAKARDLRRGDKVKVVSRRGEVISIVETRGRNRPPQGLVYMPFFDAAQLVNKLMLDATDPLSKETDFKKCAVKLEKV.

The segment at residues 1–31 (MKLSRRGFMKANAVAAAAAAAGLSVPGVARA) is a signal peptide (tat-type signal). The 57-residue stretch at 39-95 (IKWDKAPCRFCGTGCGVLVGTQQGRVVACQGDPDAPVNRGLNCIKGYFLPKIMYGED) folds into the 4Fe-4S Mo/W bis-MGD-type domain. Residues Cys-46, Cys-49, Cys-53, and Cys-81 each contribute to the [4Fe-4S] cluster site. Residues Lys-83, Gln-150, Asn-175, Cys-179, 212–219 (WGANMAEM), 243–247 (STYQH), 262–264 (QSD), Met-372, Gln-376, Asn-482, 508–509 (SD), Lys-531, Asp-558, and 718–727 (TGRVLEHWHT) contribute to the Mo-bis(molybdopterin guanine dinucleotide) site. Phe-794 serves as a coordination point for substrate. Positions 802 and 819 each coordinate Mo-bis(molybdopterin guanine dinucleotide).

This sequence belongs to the prokaryotic molybdopterin-containing oxidoreductase family. NasA/NapA/NarB subfamily. As to quaternary structure, component of the periplasmic nitrate reductase NapAB complex composed of NapA and NapB. Requires [4Fe-4S] cluster as cofactor. It depends on Mo-bis(molybdopterin guanine dinucleotide) as a cofactor. Post-translationally, predicted to be exported by the Tat system. The position of the signal peptide cleavage has not been experimentally proven.

The protein localises to the periplasm. The enzyme catalyses 2 Fe(II)-[cytochrome] + nitrate + 2 H(+) = 2 Fe(III)-[cytochrome] + nitrite + H2O. Functionally, catalytic subunit of the periplasmic nitrate reductase complex NapAB. Receives electrons from NapB and catalyzes the reduction of nitrate to nitrite. The polypeptide is Periplasmic nitrate reductase (Shigella dysenteriae serotype 1 (strain Sd197)).